Consider the following 1401-residue polypeptide: Lysine-specific demethylase 6A (1401 aa).

The tract at residues 1–1095 is interaction with SUPT6H; that stretch reads MKSCGVSLAT…TNIDLSDDKK (1095 aa). TPR repeat units lie at residues 93-126, 130-163, 170-199, 205-238, 250-283, 284-317, 318-351, and 352-385; these read SDFF…QSDY, AAFL…DPSF, HLRL…DCNP, AEIQ…ENLS, GWMH…DPNS, GQSW…SEAS, ADTW…DHGH, and AAAW…KSCS. The segment covering 437 to 449 has biased composition (polar residues); sequence AMNTAQQNTSDNW. The tract at residues 437 to 457 is disordered; the sequence is AMNTAQQNTSDNWSGGHAVSH. Omega-N-methylarginine is present on Arg519. The tract at residues 521 to 541 is disordered; that stretch reads TGIPNGPTADSSLPTNSVSGQ. Position 549 is an omega-N-methylarginine (Arg549). 2 stretches are compositionally biased toward polar residues: residues 624-652 and 660-724; these read LTSS…SHSA and LSST…SGNI. Disordered regions lie at residues 624-746, 758-778, 810-864, 914-940, and 1043-1079; these read LTSS…SVEG, AVCS…SDNP, KTDN…ESQS, LLDK…NPPT, and FQES…KGPF. A Phosphoserine modification is found at Ser769. Positions 814–833 are enriched in low complexity; the sequence is SVASSPSSAISTATPSPKST. Thr827 carries the phosphothreonine modification. Ser829 bears the Phosphoserine mark. Polar residues predominate over residues 834–848; sequence EQTTTNSVTSLNSPH. Positions 918–931 are enriched in pro residues; that stretch reads CPPPRPPSSPYPPL. A compositionally biased stretch (basic and acidic residues) spans 1046 to 1063; that stretch reads SLREENEKRSHHKDHSDS. The JmjC domain occupies 1095 to 1258; sequence KWKLQLHELT…YKLAVERYEW (164 aa). Fe cation-binding residues include His1146, Glu1148, and His1226. Cys1331, Cys1334, Cys1358, and Cys1361 together coordinate Zn(2+).

The protein belongs to the UTX family. In terms of assembly, interacts with TLE1. Component of the MLL2/3 complex (also named ASCOM complex), at least composed of KMT2D/MLL2 or KMT2C/MLL3, ASH2L, RBBP5, WDR5, NCOA6, DPY30, KDM6A (or KDM6B), PAXIP1/PTIP, PAGR1 and alpha- and beta-tubulin. Interacts with SUPT6H. Interacts with SMARCA4. Interacts with PROSER1. It depends on L-ascorbate as a cofactor. Fe(2+) serves as cofactor.

The protein localises to the nucleus. The enzyme catalyses N(6),N(6),N(6)-trimethyl-L-lysyl(27)-[histone H3] + 2 2-oxoglutarate + 2 O2 = N(6)-methyl-L-lysyl(27)-[histone H3] + 2 formaldehyde + 2 succinate + 2 CO2. Functionally, histone demethylase that specifically demethylates 'Lys-27' of histone H3, thereby playing a central role in histone code. Demethylates trimethylated and dimethylated but not monomethylated H3 'Lys-27'. Plays a central role in regulation of posterior development, by regulating HOX gene expression. Demethylation of 'Lys-27' of histone H3 is concomitant with methylation of 'Lys-4' of histone H3, and regulates the recruitment of the PRC1 complex and monoubiquitination of histone H2A. Plays a demethylase-independent role in chromatin remodeling to regulate T-box family member-dependent gene expression. The sequence is that of Lysine-specific demethylase 6A (KDM6A) from Homo sapiens (Human).